A 622-amino-acid chain; its full sequence is TAF6-like RNA polymerase II p300/CBP-associated factor-associated factor 65 kDa subunit 6L (622 aa).

Disordered stretches follow at residues 403–430 and 457–546; these read QESS…GPED and GTGQ…TRDV. Residues S495 and S501 each carry the phosphoserine modification. A compositionally biased stretch (low complexity) spans 511 to 522; that stretch reads ASASGPAASESR. An asymmetric dimethylarginine mark is found at R555, R561, and R593.

This sequence belongs to the TAF6 family. The PCAF complex is composed of a number of TBP-associated factors (TAFS), such as TAF5, TAF5L, TAF6, TAF6L, TAF9, TAF10 and TAF12, PCAF, and also PCAF-associated factors (PAFs), such as TADA2L/ADA2, TADA3L/ADA3 and SPT3. Component of the STAGA transcription coactivator-HAT complex, at least composed of SUPT3H, GCN5L2, TAF5L, TAF6L, SUPT7L, TADA3L, TAD1L, TAF10, TAF12, TRRAP and TAF9.

It is found in the nucleus. Functionally, functions as a component of the PCAF complex. The PCAF complex is capable of efficiently acetylating histones in a nucleosomal context. The PCAF complex could be considered as the human version of the yeast SAGA complex. With TAF5L, acts as an epigenetic regulator essential for somatic reprogramming. Regulates target genes through H3K9ac deposition and MYC recruitment which trigger MYC regulatory network to orchestrate gene expression programs to control embryonic stem cell state. Functions with MYC to activate target gene expression through RNA polymerase II pause release. In Homo sapiens (Human), this protein is TAF6-like RNA polymerase II p300/CBP-associated factor-associated factor 65 kDa subunit 6L.